We begin with the raw amino-acid sequence, 104 residues long: Naphthalene 1,2-dioxygenase system, ferredoxin component (104 aa).

The Rieske domain maps to Ile6–Ile101. 4 residues coordinate [2Fe-2S] cluster: Cys45, His47, Cys64, and His67.

The protein belongs to the bacterial ring-hydroxylating dioxygenase ferredoxin component family. As to quaternary structure, the naphthalene dioxygenase (NDO) multicomponent enzyme system is composed of an electron transfer component and a dioxygenase component (iron sulfur protein (ISP)). The electron transfer component is composed of a ferredoxin reductase (NdoR) and a ferredoxin (NdoA), and the dioxygenase component is formed of a heterohexamer (trimer of heterodimers) of three large alpha subunits (NdoB) and three small beta subunits (NdoC). Requires [2Fe-2S] cluster as cofactor.

It participates in aromatic compound metabolism; naphthalene degradation. Component of the naphthalene dioxygenase (NDO) multicomponent enzyme system which catalyzes the incorporation of both atoms of molecular oxygen into naphthalene to form cis-(1R,2S)-dihydroxy-1,2-dihydronaphthalene. Functions as an intermediate electron transfer protein via a specific interaction with iron sulfur protein components (ISP) (NdoB and NdoC). In Pseudomonas aeruginosa, this protein is Naphthalene 1,2-dioxygenase system, ferredoxin component.